Reading from the N-terminus, the 850-residue chain is Mitogen-activated protein kinase kinase kinase 11 (850 aa).

Position 11 is a phosphoserine (S11). Residues 16 to 35 (WNGSGSGGGGGTGGVRPEGS) form a disordered region. Positions 17–31 (NGSGSGGGGGTGGVR) are enriched in gly residues. S35 carries the post-translational modification Phosphoserine. In terms of domain architecture, SH3 spans 42-106 (YANPVWTALF…PSNYVSRGGG (65 aa)). A Protein kinase domain is found at 118–380 (LRLEEVIGIG…ASILQQLEAL (263 aa)). Residues 124 to 132 (IGIGGFGKV) and K145 contribute to the ATP site. Residue D242 is the Proton acceptor of the active site. The residue at position 278 (T278) is a Phosphothreonine; by autocatalysis. Phosphoserine; by autocatalysis and MAP4K1 is present on S282. S395 carries the phosphoserine modification. Leucine-zipper stretches follow at residues 404–425 (IQGLFDELRAKEKELLSREEEL) and 439–460 (LRRREHLLAQWELEVFERELTL). A phosphoserine mark is found at S508 and S525. The segment at 535–644 (QLEPTESGQT…SSGTPKLIQR (110 aa)) is disordered. Residues 538–547 (PTESGQTWGR) are compositionally biased toward polar residues. S549, S556, and S557 each carry phosphoserine. The segment covering 551–563 (RRLEDSSNGERRA) has biased composition (basic and acidic residues). Low complexity predominate over residues 598–610 (SSPLGSPSTPPAL). At S655 the chain carries Phosphoserine. A disordered region spans residues 657–850 (GLGRDLQPPG…QAPWAPEAGP (194 aa)). A compositionally biased stretch (pro residues) spans 677–693 (TAPPPAQMPSPCPPELP). The segment covering 700–711 (LSQTTPDAHSSP) has biased composition (polar residues). S709 bears the Phosphoserine mark. T712 is subject to Phosphothreonine. Phosphoserine occurs at positions 728, 731, 743, 751, 761, 773, 792, 796, and 818. Low complexity predominate over residues 763-776 (PLGLISRPRPSPLR). The segment covering 790–802 (RPSPLPSPQPAPR) has biased composition (pro residues). Over residues 803–819 (RAPWTLFPDSDPFWDSP) the composition is skewed to low complexity.

Belongs to the protein kinase superfamily. STE Ser/Thr protein kinase family. MAP kinase kinase kinase subfamily. In terms of assembly, homodimer; undergoes dimerization during activation. Interacts with MAP2K4/MKK4 and MAP2K7/MKK7. Found in a complex with SH3RF1, RAC1, MAP2K7/MKK7, MAPK8IP1/JIP1 and MAPK8/JNK1. Mg(2+) is required as a cofactor. Autophosphorylation on serine and threonine residues within the activation loop plays a role in enzyme activation. Thr-278 is likely to be the main autophosphorylation site. Phosphorylation of Ser-556 and Ser-557 is induced by CDC42.

The protein resides in the cytoplasm. It is found in the cytoskeleton. It localises to the microtubule organizing center. Its subcellular location is the centrosome. The enzyme catalyses L-seryl-[protein] + ATP = O-phospho-L-seryl-[protein] + ADP + H(+). It catalyses the reaction L-threonyl-[protein] + ATP = O-phospho-L-threonyl-[protein] + ADP + H(+). Its activity is regulated as follows. Homodimerization via the leucine zipper domains is required for autophosphorylation and subsequent activation. In terms of biological role, activates the JUN N-terminal pathway. Required for serum-stimulated cell proliferation and for mitogen and cytokine activation of MAPK14 (p38), MAPK3 (ERK) and MAPK8 (JNK1) through phosphorylation and activation of MAP2K4/MKK4 and MAP2K7/MKK7. Plays a role in mitogen-stimulated phosphorylation and activation of BRAF, but does not phosphorylate BRAF directly. Influences microtubule organization during the cell cycle. This chain is Mitogen-activated protein kinase kinase kinase 11 (Map3k11), found in Mus musculus (Mouse).